The primary structure comprises 75 residues: UPF0352 protein PMI0824 (75 aa).

The protein belongs to the UPF0352 family.

This chain is UPF0352 protein PMI0824, found in Proteus mirabilis (strain HI4320).